The chain runs to 204 residues: General stress protein Ctc (204 aa).

A disordered region spans residues 177–204 (ILPPQQQEAAEVDEEESADAQPEGENEQ). Over residues 186–204 (AEVDEEESADAQPEGENEQ) the composition is skewed to acidic residues.

This sequence belongs to the bacterial ribosomal protein bL25 family. CTC subfamily. In terms of assembly, part of the ribosome (presumably the 50S subunit) under heat-stress but not control growth conditions. Binds 5S rRNA.

Not required for exponential growth; probably functions in vegetatively growing cells, maybe required for accurate translation under stress conditions. In Bacillus subtilis (strain 168), this protein is General stress protein Ctc.